A 137-amino-acid chain; its full sequence is Large ribosomal subunit protein uL16 (137 aa).

It belongs to the universal ribosomal protein uL16 family. In terms of assembly, part of the 50S ribosomal subunit.

Binds 23S rRNA and is also seen to make contacts with the A and possibly P site tRNAs. The protein is Large ribosomal subunit protein uL16 of Methylocella silvestris (strain DSM 15510 / CIP 108128 / LMG 27833 / NCIMB 13906 / BL2).